A 189-amino-acid polypeptide reads, in one-letter code: GTP cyclohydrolase 1 (189 aa).

Residues Cys78, His81, and Cys150 each contribute to the Zn(2+) site.

The protein belongs to the GTP cyclohydrolase I family. In terms of assembly, toroid-shaped homodecamer, composed of two pentamers of five dimers.

The catalysed reaction is GTP + H2O = 7,8-dihydroneopterin 3'-triphosphate + formate + H(+). It participates in cofactor biosynthesis; 7,8-dihydroneopterin triphosphate biosynthesis; 7,8-dihydroneopterin triphosphate from GTP: step 1/1. This chain is GTP cyclohydrolase 1, found in Listeria welshimeri serovar 6b (strain ATCC 35897 / DSM 20650 / CCUG 15529 / CIP 8149 / NCTC 11857 / SLCC 5334 / V8).